Consider the following 386-residue polypeptide: Pepsin A (386 aa).

The N-terminal stretch at 1–15 (MKWLLLISLVALSEC) is a signal peptide. The propeptide at 16–60 (AIVKVPLVRKKSLRQNLIEHGLLNDFLKNQSPNPASKYFPQEPTV) is activation peptide. A Peptidase A1 domain is found at 74 to 383 (YFGTIGIGTP…DRANNQVGLA (310 aa)). Aspartate 92 is a catalytic residue. Cystine bridges form between cysteine 105–cysteine 110 and cysteine 266–cysteine 270. Aspartate 275 is an active-site residue. A disulfide bridge connects residues cysteine 309 and cysteine 342.

This sequence belongs to the peptidase A1 family.

It localises to the secreted. It carries out the reaction Preferential cleavage: hydrophobic, preferably aromatic, residues in P1 and P1' positions. Cleaves 1-Phe-|-Val-2, 4-Gln-|-His-5, 13-Glu-|-Ala-14, 14-Ala-|-Leu-15, 15-Leu-|-Tyr-16, 16-Tyr-|-Leu-17, 23-Gly-|-Phe-24, 24-Phe-|-Phe-25 and 25-Phe-|-Tyr-26 bonds in the B chain of insulin.. Its function is as follows. Shows particularly broad specificity; although bonds involving phenylalanine and leucine are preferred, many others are also cleaved to some extent. The protein is Pepsin A (PGA) of Canis lupus familiaris (Dog).